Reading from the N-terminus, the 377-residue chain is tRNA-specific 2-thiouridylase MnmA (377 aa).

ATP is bound by residues 8-15 and M34; that span reads GMSGGVDS. Positions 94–96 are interaction with target base in tRNA; the sequence is NPD. C99 serves as the catalytic Nucleophile. A disulfide bridge connects residues C99 and C201. G123 provides a ligand contact to ATP. The interaction with tRNA stretch occupies residues 151–153; sequence KDQ. The Cysteine persulfide intermediate role is filled by C201. The interaction with tRNA stretch occupies residues 315–316; sequence RY.

It belongs to the MnmA/TRMU family.

The protein localises to the cytoplasm. The catalysed reaction is S-sulfanyl-L-cysteinyl-[protein] + uridine(34) in tRNA + AH2 + ATP = 2-thiouridine(34) in tRNA + L-cysteinyl-[protein] + A + AMP + diphosphate + H(+). In terms of biological role, catalyzes the 2-thiolation of uridine at the wobble position (U34) of tRNA, leading to the formation of s(2)U34. This is tRNA-specific 2-thiouridylase MnmA from Acinetobacter baylyi (strain ATCC 33305 / BD413 / ADP1).